Consider the following 463-residue polypeptide: Chaperone SurA (463 aa).

A signal peptide spans 1–25 (MTKPFSVVLASLLAITSTVSPLASA). 2 PpiC domains span residues 174 to 276 (GSQY…KLVE) and 289 to 388 (VTEY…QRVG). Disordered stretches follow at residues 328–348 (QATA…GDLG) and 432–463 (RTGD…KPTR). Low complexity predominate over residues 440-452 (NATAAPAKSADPA). A compositionally biased stretch (pro residues) spans 453 to 463 (APSPPPAKPTR).

The protein resides in the periplasm. The catalysed reaction is [protein]-peptidylproline (omega=180) = [protein]-peptidylproline (omega=0). Functionally, chaperone involved in the correct folding and assembly of outer membrane proteins. Recognizes specific patterns of aromatic residues and the orientation of their side chains, which are found more frequently in integral outer membrane proteins. May act in both early periplasmic and late outer membrane-associated steps of protein maturation. The polypeptide is Chaperone SurA (Xanthomonas euvesicatoria pv. vesicatoria (strain 85-10) (Xanthomonas campestris pv. vesicatoria)).